We begin with the raw amino-acid sequence, 110 residues long: MADKVLKEKRKQFIRSVGEGTINGLLGELLETRVLSQEEIEIVKCENATVMDKARALLDSVIRKGAPACQICITYICEEDSHLAGTLGLSAGPTSGNHLTTQDSQIVLPS.

The region spanning 1–91 (MADKVLKEKR…HLAGTLGLSA (91 aa)) is the CARD domain.

As to quaternary structure, interacts with pro-CASP1. As to expression, ubiquitous.

It is found in the cytoplasm. Regulator of procaspase-1/CASP1 activation implicated in the regulation of the proteolytic maturation of pro-IL-1beta/IL1B and its release during inflammation. Inhibits the release of IL1B in response to LPS in monocytes. However, unlike CASP1, do not induce NF-kappa-B activation. The protein is Putative caspase recruitment domain-containing protein 17P (CARD17P) of Homo sapiens (Human).